The sequence spans 511 residues: GMP synthase [glutamine-hydrolyzing] (511 aa).

The Glutamine amidotransferase type-1 domain occupies 3 to 198 (SVLVLDFGSQ…LLNIAAITPD (196 aa)). The Nucleophile role is filled by Cys-80. Active-site residues include His-172 and Glu-174. A GMPS ATP-PPase domain is found at 199 to 386 (WSSKSFIEHQ…LGIPEDILMR (188 aa)). Position 226 to 232 (226 to 232 (SGGVDST)) interacts with ATP.

In terms of assembly, homodimer.

It carries out the reaction XMP + L-glutamine + ATP + H2O = GMP + L-glutamate + AMP + diphosphate + 2 H(+). Its pathway is purine metabolism; GMP biosynthesis; GMP from XMP (L-Gln route): step 1/1. Functionally, catalyzes the synthesis of GMP from XMP. The sequence is that of GMP synthase [glutamine-hydrolyzing] from Chlorobium chlorochromatii (strain CaD3).